Here is a 506-residue protein sequence, read N- to C-terminus: MPPTSVSPPRTAPGPANPSPAHPSRVRVIHPGGGKPGGPVVYWMLRDQRLADNWALLHAAGLAAASASPLAVAFALFPRPFLLSARRRQLGFLLRGLRRLAADAAARHLPFFLFTGGPAEIPALVRRLGASTLVADFSPLRPVREALDAVVGDLRREAPGVAVHQVDAHNVVPVWTASAKMEYSAKTFRGKVSKVMDEYLVEFPELPAVVPWDREQPEGVDWDALIARVCSEAENVPEIDWCEPGEEAAIEALLGSKDGFLTKRIKSYETDRNDPTKPRALSGLSPYLHFGHISAQRCALEAKKCRHLSPKSVDAFLEELVVRRELADNFCYYQPQYDSLSGAWEWARKTLMDHAADKREHIYTREQLENAKTHDPLWNASQLEMVHHGKMHGFMRMYWAKKILEWTSGPEEALSTAIYLNDKYEIDGRDPSGYVGCMWSICGLHDQGWKERPVFGKIRYMNYAGCKRKFDVDAYISYVKRLAGQSKKRNAEESPNPVVKLSKSQH.

Over residues 1 to 21 (MPPTSVSPPRTAPGPANPSPA) the composition is skewed to pro residues. The disordered stretch occupies residues 1–33 (MPPTSVSPPRTAPGPANPSPAHPSRVRVIHPGG). The Photolyase/cryptochrome alpha/beta domain occupies 38–171 (GPVVYWMLRD…AVHQVDAHNV (134 aa)). FAD contacts are provided by residues Tyr-268 and 282-285 (SGLS). Residue Ser-312 is modified to Phosphoserine. FAD-binding positions include 319–327 (ELVVRRELA), Lys-390, Asn-421, Asp-427, and 427–429 (DGR). The interval 487 to 506 (KKRNAEESPNPVVKLSKSQH) is disordered.

This sequence belongs to the DNA photolyase class-2 family. Requires FAD as cofactor. In terms of tissue distribution, expressed in proliferating tissues. Highly expressed in roots and shoot apical meristem (SAM). Expressed in leaves, flag leaves, and panicle.

It is found in the nucleus. It catalyses the reaction cyclobutadipyrimidine (in DNA) = 2 pyrimidine residues (in DNA).. In terms of biological role, involved in repair of UV radiation-induced DNA damage. Catalyzes the light-dependent monomerization (300-600 nm) of cyclobutylpyrimidine dimers (CPDs), which are formed between adjacent bases on the same DNA strand upon exposure to ultraviolet radiation. Required for plant survival in the presence of UV-B light. Not involved in the repair of (6-4) photoproducts. In Oryza sativa subsp. japonica (Rice), this protein is Deoxyribodipyrimidine photo-lyase (PHR).